Here is a 354-residue protein sequence, read N- to C-terminus: MTALSRSEATEEGGNQQMHRKTASLNSPVSCKEKPDRVEEPPDYSLHWPEGLKGEEIKKCGREGITLNKYNQQYHKLFKDVPLEEVVLKVCSCALQRDFLLQGRLYISPNWLCFHASLFGKDIKVVIPVVSVQMIKKHKMARLLPNGLAITTNTSQKYIFVSLLSRDSVYDLLRRVCTHLQPSSKKSLSVREFSGEPESLEVLIPEMKWRKVCPSSRSLSLPDNIPCIPPSSVDSTDSFFPSRKPPMSEKSRAQVASENGGRWAWPMPGWGPACPKKMPNCSPTAKNAVYEEDELEEEPRSTGELRLWDYRLLKVFFVLICFLVMSSSYLAFRISRLEQQLCSLSWDDPVPGHR.

Residues 1 to 29 (MTALSRSEATEEGGNQQMHRKTASLNSPV) show a composition bias toward polar residues. Residues 1 to 46 (MTALSRSEATEEGGNQQMHRKTASLNSPVSCKEKPDRVEEPPDYSL) form a disordered region. Residues 31–40 (CKEKPDRVEE) are compositionally biased toward basic and acidic residues. In terms of domain architecture, GRAM spans 72–139 (QQYHKLFKDV…VSVQMIKKHK (68 aa)). Residues 312–332 (LLKVFFVLICFLVMSSSYLAF) form a helical membrane-spanning segment.

The protein resides in the endoplasmic reticulum membrane. Its subcellular location is the cell membrane. In terms of biological role, participates in the organization of endoplasmic reticulum-plasma membrane contact sites (EPCS) with pleiotropic functions including STIM1 recruitment and calcium homeostasis. Constitutive tether that co-localize with ESYT2/3 tethers at endoplasmic reticulum-plasma membrane contact sites in a phosphatidylinositol lipid-dependent manner. Pre-marks the subset of phosphtidylinositol 4,5-biphosphate (PI(4,5)P2)-enriched EPCS destined for the store operated calcium entry pathway (SOCE). The chain is GRAM domain-containing protein 2A from Homo sapiens (Human).